A 256-amino-acid polypeptide reads, in one-letter code: Non-homologous end joining protein Ku 2 (256 aa).

The Ku domain occupies 13–184; sequence FADTDVAVKL…SLELQESPVS (172 aa).

Belongs to the prokaryotic Ku family. In terms of assembly, homodimer. Interacts with LigD.

In terms of biological role, with LigD forms a non-homologous end joining (NHEJ) DNA repair enzyme, which repairs dsDNA breaks with reduced fidelity. Binds linear dsDNA with 5'- and 3'- overhangs but not closed circular dsDNA nor ssDNA. Recruits and stimulates the ligase activity of LigD. The chain is Non-homologous end joining protein Ku 2 from Geotalea uraniireducens (strain Rf4) (Geobacter uraniireducens).